The chain runs to 406 residues: Glycosylated lysosomal membrane protein (406 aa).

The signal sequence occupies residues 1 to 35; sequence MRGSVECTWGWGHCAPSPLLLWTLLLFAAPFGLLG. Over 36–372 the chain is Lumenal; the sequence is EKTRQVSLEV…VDGLSPLVLG (337 aa). 5 N-linked (GlcNAc...) asparagine glycosylation sites follow: N65, N134, N159, N187, and N230. Residues 373 to 393 traverse the membrane as a helical segment; sequence IMAVALGAPGLMLLGGGLVLL. Over 394–406 the chain is Cytoplasmic; the sequence is LHHKKYSEYQSIN. The short motif at 402 to 406 is the Lysosomal targeting motif element; sequence YQSIN.

Belongs to the GLMP family. In terms of assembly, interacts (via lumenal domain) with lysosomal protein MFSD1; the interaction starts while both proteins are still in the endoplasmic reticulum and is required for stabilization of MFSD1 in lysosomes but has no direct effect on its targeting to lysosomes or transporter activity. In terms of processing, highly N-glycosylated. N-glycosylation is essential for GLMP stability and for MFSD1 lysosomal localization.

The protein localises to the lysosome membrane. Functionally, required to protect lysosomal transporter MFSD1 from lysosomal proteolysis and for MFSD1 lysosomal localization. This is Glycosylated lysosomal membrane protein from Homo sapiens (Human).